A 341-amino-acid chain; its full sequence is Retinol dehydrogenase 10-B (341 aa).

A helical; Signal-anchor membrane pass occupies residues 3–23 (IVLEFFLVTFRVLWAFVLAAA). 40–64 (LITGAGSGLGRLFALEFARRRAQLV) provides a ligand contact to NADP(+). Residue Ser197 participates in substrate binding. The active-site Proton acceptor is the Tyr210.

It belongs to the short-chain dehydrogenases/reductases (SDR) family.

The protein resides in the microsome membrane. The protein localises to the endoplasmic reticulum membrane. It carries out the reaction all-trans-retinol + NADP(+) = all-trans-retinal + NADPH + H(+). It functions in the pathway cofactor metabolism; retinol metabolism. Retinol dehydrogenase with a clear preference for NADP. Converts all-trans-retinol to all-trans-retinal. Has no detectable activity towards 11-cis-retinol, 9-cis-retinol and 13-cis-retinol. In Xenopus laevis (African clawed frog), this protein is Retinol dehydrogenase 10-B (rdh10-b).